We begin with the raw amino-acid sequence, 202 residues long: MARYRGARLRITRRLGELPGLTRKSARREYPPGQHGQGRRKRSEYAIRLEEKQKLRFNYGVSEKQLIRYVRKARRTTGSTGQTILQLLEMRLDNTVFRLGMAGTIPGARQLVNHGHILVNGRVVDIPSYQCRPGDVITVRDRDRSRKLIEANMEFPGLANIPSHLEFDKPTLTGKVNGIIEREWVALQINELLVVEYYSRMA.

Residues 18 to 44 (LPGLTRKSARREYPPGQHGQGRRKRSE) are disordered. In terms of domain architecture, S4 RNA-binding spans 90–152 (MRLDNTVFRL…DRSRKLIEAN (63 aa)).

Belongs to the universal ribosomal protein uS4 family. As to quaternary structure, part of the 30S ribosomal subunit. Contacts protein S5. The interaction surface between S4 and S5 is involved in control of translational fidelity.

Its function is as follows. One of the primary rRNA binding proteins, it binds directly to 16S rRNA where it nucleates assembly of the body of the 30S subunit. Functionally, with S5 and S12 plays an important role in translational accuracy. The chain is Small ribosomal subunit protein uS4 from Picosynechococcus sp. (strain ATCC 27264 / PCC 7002 / PR-6) (Agmenellum quadruplicatum).